We begin with the raw amino-acid sequence, 940 residues long: MASPPSSGQPRPPPPPPPPARLLLPLLLSLLLWLAPGAWGWTRGAPRPPPSSPPLSIMGLMPLTKEVAKGSIGRGVLPAVELAIEQIRNESLLRPYFLDLRLYDTECDNAKGLKAFYDAIKYGPNHLMVFGGVCPSVTSIIAESLQGWNLVQLSFAATTPVLADKKKYPYFFRTVPSDNAVNPAILKLLKHFRWRRVGTLTQDVQRFSEVRNDLTGVLYGEDIEISDTESFSNDPCTSVKKLKGNDVRIILGQFDQNMAAKVFCCAFEESMFGSKYQWIIPGWYEPAWWEQVHVEANSSRCLRRSLLAAMEGYIGVDFEPLSSKQIKTISGKTPQQFEREYNSKRSGVGPSKFHGYAYDGIWVIAKTLQRAMETLHASSRHQRIQDFNYTDHTLGKIILNAMNETNFFGVTGQVVFRNGERMGTIKFTQFQDSREVKVGEYNAVADTLEIINDTIRFQGSEPPKDKTIILEQLRKISLPLYSILSALTILGMIMASAFLFFNIKNRNQKLIKMSSPYMNNLIILGGMLSYASIFLFGLDGSFVSEKTFETLCTVRTWILTVGYTTAFGAMFAKTWRVHAIFKNVKMKKKIIKDQKLLVIVGGMLLIDLCILICWQAVDPLRRTVERYSMEPDPAGRDISIRPLLEHCENTHMTIWLGIVYAYKGLLMLFGCFLAWETRNVSIPALNDSKYIGMSVYNVGIMCIIGAAVSFLTRDQPNVQFCIVALVIIFCSTITLCLVFVPKLITLRTNPDAATQNRRFQFTQNQKKEDSKTSTSVTSVNQASTSRLEGLQSENHRLRMKITELDKDLEEVTMQLQDTPEKTTYIKQNHYQELNDILSLGNFTESTDGGKAILKNHLDQNPQLQWNTTEPSRTCKDPIEDINSPEHIQRRLSLQLPILHHAYLPSIGGVDASCVSPCVSPTASPRHRHVPPSFRVMVSGL.

Residues 1–40 form the signal peptide; that stretch reads MASPPSSGQPRPPPPPPPPARLLLPLLLSLLLWLAPGAWG. At 41–482 the chain is on the extracellular side; sequence WTRGAPRPPP…LRKISLPLYS (442 aa). Residue Asn89 is glycosylated (N-linked (GlcNAc...) asparagine). 3 disulfides stabilise this stretch: Cys107/Cys134, Cys236/Cys265, and Cys264/Cys301. 4 N-linked (GlcNAc...) asparagine glycosylation sites follow: Asn297, Asn388, Asn403, and Asn452. A helical transmembrane segment spans residues 483-503; that stretch reads ILSALTILGMIMASAFLFFNI. At 504-521 the chain is on the cytoplasmic side; sequence KNRNQKLIKMSSPYMNNL. The chain crosses the membrane as a helical span at residues 522-542; it reads IILGGMLSYASIFLFGLDGSF. Residues 543 to 550 lie on the Extracellular side of the membrane; the sequence is VSEKTFET. A helical membrane pass occupies residues 551–571; the sequence is LCTVRTWILTVGYTTAFGAMF. Residues 572 to 596 lie on the Cytoplasmic side of the membrane; that stretch reads AKTWRVHAIFKNVKMKKKIIKDQKL. A helical transmembrane segment spans residues 597-617; it reads LVIVGGMLLIDLCILICWQAV. Residues 618 to 653 are Extracellular-facing; the sequence is DPLRRTVERYSMEPDPAGRDISIRPLLEHCENTHMT. A helical transmembrane segment spans residues 654–674; sequence IWLGIVYAYKGLLMLFGCFLA. Topologically, residues 675–690 are cytoplasmic; that stretch reads WETRNVSIPALNDSKY. Residues 691-711 form a helical membrane-spanning segment; the sequence is IGMSVYNVGIMCIIGAAVSFL. Over 712–719 the chain is Extracellular; that stretch reads TRDQPNVQ. A helical membrane pass occupies residues 720–740; sequence FCIVALVIIFCSTITLCLVFV. The Cytoplasmic segment spans residues 741-940; it reads PKLITLRTNP…PSFRVMVSGL (200 aa). The segment at 762 to 789 is disordered; sequence TQNQKKEDSKTSTSVTSVNQASTSRLEG. Polar residues predominate over residues 772-786; it reads TSTSVTSVNQASTSR. Phosphoserine is present on residues Ser775 and Ser778. Residues 780-818 adopt a coiled-coil conformation; sequence NQASTSRLEGLQSENHRLRMKITELDKDLEEVTMQLQDT. A Phosphothreonine modification is found at Thr818. 6 positions are modified to phosphoserine: Ser883, Ser892, Ser912, Ser915, Ser919, and Ser923.

It belongs to the G-protein coupled receptor 3 family. GABA-B receptor subfamily. As to quaternary structure, heterodimer of GABBR1 and GABBR2. Homodimers may form, but are inactive. Interacts (via C-terminus) with ATF4 (via leucine zipper domain). Interacts with KCTD8, KCTD12 and KCTD16; this interaction determines the pharmacology and kinetics of the receptor response, the KCTD proteins markedly accelerating the GABA-B response, although to different extents. Highly expressed in areas of the brain including thalamic nuclei, the hippocampus, cerebellar Purkinje cells and the medial habenula, and moderately expressed in the cerebral cortex, certain anterioventral thalamic nuclei, dorsal medial hypothalamic nucleus and suprachiasmatic nuclei. Also weakly expressed in the testis.

It localises to the cell membrane. Its subcellular location is the postsynaptic cell membrane. The protein localises to the perikaryon. It is found in the cell projection. The protein resides in the dendrite. In terms of biological role, component of a heterodimeric G-protein coupled receptor for GABA, formed by GABBR1 and GABBR2. Within the heterodimeric GABA receptor, only GABBR1 seems to bind agonists, while GABBR2 mediates coupling to G proteins. Ligand binding causes a conformation change that triggers signaling via guanine nucleotide-binding proteins (G proteins) and modulates the activity of down-stream effectors, such as adenylate cyclase. Signaling inhibits adenylate cyclase, stimulates phospholipase A2, activates potassium channels, inactivates voltage-dependent calcium-channels and modulates inositol phospholipid hydrolysis. Plays a critical role in the fine-tuning of inhibitory synaptic transmission. Pre-synaptic GABA receptor inhibits neurotransmitter release by down-regulating high-voltage activated calcium channels, whereas postsynaptic GABA receptor decreases neuronal excitability by activating a prominent inwardly rectifying potassium (Kir) conductance that underlies the late inhibitory postsynaptic potentials. Not only implicated in synaptic inhibition but also in hippocampal long-term potentiation, slow wave sleep, muscle relaxation and antinociception. This is Gamma-aminobutyric acid type B receptor subunit 2 (Gabbr2) from Rattus norvegicus (Rat).